Reading from the N-terminus, the 371-residue chain is Bifunctional enzyme IspD/IspF (371 aa).

Residues 1 to 212 are 2-C-methyl-D-erythritol 4-phosphate cytidylyltransferase; sequence MKDITLVLLA…FDFTPASGTI (212 aa). The 2-C-methyl-D-erythritol 2,4-cyclodiphosphate synthase stretch occupies residues 213 to 371; that stretch reads FTGNGFDVHA…NLGYFDWRKF (159 aa). Aspartate 219 and histidine 221 together coordinate a divalent metal cation. 4-CDP-2-C-methyl-D-erythritol 2-phosphate-binding positions include 219-221 and 245-246; these read DVH and HS. Histidine 253 serves as a coordination point for a divalent metal cation. 4-CDP-2-C-methyl-D-erythritol 2-phosphate is bound by residues 267–269, 272–276, 341–344, phenylalanine 348, and arginine 351; these read DIG, FPDTD, and STTE.

The protein in the N-terminal section; belongs to the IspD/TarI cytidylyltransferase family. IspD subfamily. This sequence in the C-terminal section; belongs to the IspF family. Requires a divalent metal cation as cofactor.

The enzyme catalyses 2-C-methyl-D-erythritol 4-phosphate + CTP + H(+) = 4-CDP-2-C-methyl-D-erythritol + diphosphate. It carries out the reaction 4-CDP-2-C-methyl-D-erythritol 2-phosphate = 2-C-methyl-D-erythritol 2,4-cyclic diphosphate + CMP. It functions in the pathway isoprenoid biosynthesis; isopentenyl diphosphate biosynthesis via DXP pathway; isopentenyl diphosphate from 1-deoxy-D-xylulose 5-phosphate: step 2/6. The protein operates within isoprenoid biosynthesis; isopentenyl diphosphate biosynthesis via DXP pathway; isopentenyl diphosphate from 1-deoxy-D-xylulose 5-phosphate: step 4/6. Its function is as follows. Bifunctional enzyme that catalyzes the formation of 4-diphosphocytidyl-2-C-methyl-D-erythritol from CTP and 2-C-methyl-D-erythritol 4-phosphate (MEP) (IspD), and catalyzes the conversion of 4-diphosphocytidyl-2-C-methyl-D-erythritol 2-phosphate (CDP-ME2P) to 2-C-methyl-D-erythritol 2,4-cyclodiphosphate (ME-CPP) with a corresponding release of cytidine 5-monophosphate (CMP) (IspF). The polypeptide is Bifunctional enzyme IspD/IspF (Campylobacter hominis (strain ATCC BAA-381 / DSM 21671 / CCUG 45161 / LMG 19568 / NCTC 13146 / CH001A)).